A 50-amino-acid chain; its full sequence is Mast cell degranulating peptide (50 aa).

The N-terminal stretch at 1-27 (MISMLRCTFFFLSVILITSYFVTPTMS) is a signal peptide. Lys-29 bears the N6-formyllysine; partial mark. Disulfide bonds link Cys-30–Cys-42 and Cys-32–Cys-46. N6-formyllysine; partial is present on residues Lys-44 and Lys-48. Position 49 is an asparagine amide (Asn-49).

Expressed by the venom gland.

The protein localises to the secreted. Functionally, potent anti-inflammatory agent. At low concentrations, mediates the degranulation of mast cells thus evoking an inflammatory response. Also acts as a neurotoxin capable of blocking a class of voltage-gated potassium channels. The chain is Mast cell degranulating peptide from Apis mellifera (Honeybee).